A 588-amino-acid chain; its full sequence is Secreted triacylglycerol lipase LIP1 (588 aa).

A signal peptide spans 1 to 20 (MRFSGFVSGLGLGLLTAVSA). The Acyl-ester intermediate role is filled by S258. N400 carries N-linked (GlcNAc...) asparagine glycosylation.

The protein belongs to the type-B carboxylesterase/lipase family.

It localises to the secreted. The enzyme catalyses a triacylglycerol + H2O = a diacylglycerol + a fatty acid + H(+). Secreted acylglycerol lipase required for efficient utilization of saturated triglyceride lipids. Is not involved in virulence. The protein is Secreted triacylglycerol lipase LIP1 of Gibberella zeae (strain ATCC MYA-4620 / CBS 123657 / FGSC 9075 / NRRL 31084 / PH-1) (Wheat head blight fungus).